Here is an 89-residue protein sequence, read N- to C-terminus: Large ribosomal subunit protein bL27 (89 aa).

A disordered region spans residues 1-24; that stretch reads MAHKKAGGSSRNGRDSAGRRLGVK.

It belongs to the bacterial ribosomal protein bL27 family.

This chain is Large ribosomal subunit protein bL27, found in Maricaulis maris (strain MCS10) (Caulobacter maris).